Consider the following 72-residue polypeptide: Translation initiation factor IF-1 (72 aa).

The S1-like domain maps to 1–72; that stretch reads MAKEGAIEVE…TRGRIVYRYK (72 aa).

This sequence belongs to the IF-1 family. Component of the 30S ribosomal translation pre-initiation complex which assembles on the 30S ribosome in the order IF-2 and IF-3, IF-1 and N-formylmethionyl-tRNA(fMet); mRNA recruitment can occur at any time during PIC assembly.

It localises to the cytoplasm. Its function is as follows. One of the essential components for the initiation of protein synthesis. Stabilizes the binding of IF-2 and IF-3 on the 30S subunit to which N-formylmethionyl-tRNA(fMet) subsequently binds. Helps modulate mRNA selection, yielding the 30S pre-initiation complex (PIC). Upon addition of the 50S ribosomal subunit IF-1, IF-2 and IF-3 are released leaving the mature 70S translation initiation complex. The polypeptide is Translation initiation factor IF-1 (Corynebacterium glutamicum (strain R)).